The chain runs to 366 residues: MVVEGVKTDFGPPYFRDLLHPVIAKNYGKWKYHEVVKPGVIKRVAESGDVIYVVRFGTPRLLSIYTVRELCDIADKYSDGYLRWTSRNNVEFFVTDESKIDDLINEVQERVGFPCGGTWDAVKGEYGLSNIVHTQGWIHCHTPAIDASGIVKAVMDELYEYFTDHKLPAMCRISLACCANMCGAVHASDIAIVGIHRTPPIPNDEAIRKTCEIPSTVAACPTGALKPDMKNKTIKVDVEKCMYCGNCYTMCPGMPLFDPENDGAAIMVGGKLSEARRMPELSKVVVPWVPNEPPRWPTLVKYVKQILEAWAANANKHERLIEWVDRIGWERFFELTGLEFTQHLIDDYRITPYFYSEFRASTQFKW.

[4Fe-4S] cluster contacts are provided by Cys-140, Cys-177, Cys-178, Cys-182, Cys-220, Cys-241, Cys-244, and Cys-247. Residue Cys-182 coordinates siroheme. The region spanning 232 to 262 is the 4Fe-4S ferredoxin-type domain; that stretch reads KTIKVDVEKCMYCGNCYTMCPGMPLFDPEND.

Heterotetramer of two alpha and two beta subunits. [4Fe-4S] cluster serves as cofactor. It depends on siroheme as a cofactor.

Its subcellular location is the membrane. The enzyme catalyses [DsrC protein]-trisulfide + NAD(+) + 3 H2O = [DsrC protein]-dithiol + sulfite + NADH + 3 H(+). In terms of biological role, catalyzes the reduction of sulfite to sulfide. This is the terminal oxidation reaction in sulfate respiration. In Archaeoglobus fulgidus (strain ATCC 49558 / DSM 4304 / JCM 9628 / NBRC 100126 / VC-16), this protein is Sulfite reductase, dissimilatory-type subunit beta (dsrB).